Consider the following 167-residue polypeptide: Nascent polypeptide-associated complex subunit beta (167 aa).

2 disordered regions span residues 1–48 (MDQA…GADD) and 133–167 (QNMQ…SKVE). Residues 25–42 (NRNRGKGTPRRKVKKVHK) are compositionally biased toward basic residues. The NAC-A/B domain occupies 45-110 (GADDKKLQAT…GEEKELTELV (66 aa)). Residues 148–161 (DEEDDIPDLVEGQD) are compositionally biased toward acidic residues.

This sequence belongs to the NAC-beta family. In terms of assembly, part of the nascent polypeptide-associated complex (NAC), consisting of egd2 and egd1. NAC associates with ribosomes via egd1.

Its subcellular location is the cytoplasm. It is found in the nucleus. Component of the nascent polypeptide-associated complex (NAC), a dynamic component of the ribosomal exit tunnel, protecting the emerging polypeptides from interaction with other cytoplasmic proteins to ensure appropriate nascent protein targeting. The NAC complex also promotes mitochondrial protein import by enhancing productive ribosome interactions with the outer mitochondrial membrane and blocks the inappropriate interaction of ribosomes translating non-secretory nascent polypeptides with translocation sites in the membrane of the endoplasmic reticulum. EGD1 may act as a transcription factor that exert a negative effect on the expression of several genes that are transcribed by RNA polymerase II. The polypeptide is Nascent polypeptide-associated complex subunit beta (egd1) (Aspergillus terreus (strain NIH 2624 / FGSC A1156)).